The chain runs to 68 residues: Small ribosomal subunit protein bS21 (68 aa).

The disordered stretch occupies residues 39–68 (PPSVKRVRKKQESERRHRKERAMRRRMMEE). Residues 54–68 (RHRKERAMRRRMMEE) show a composition bias toward basic residues.

This sequence belongs to the bacterial ribosomal protein bS21 family.

In Orientia tsutsugamushi (strain Ikeda) (Rickettsia tsutsugamushi), this protein is Small ribosomal subunit protein bS21.